The sequence spans 193 residues: Recombination protein RecR (193 aa).

The segment at 61–76 adopts a C4-type; degenerate zinc-finger fold; sequence CASCNALSETEVSEIC. Positions 84-170 constitute a Toprim domain; sequence SQLCMVLHPR…TFTKIAQGVP (87 aa).

Belongs to the RecR family.

In terms of biological role, may play a role in DNA repair. It seems to be involved in an RecBC-independent recombinational process of DNA repair. It may act with RecF and RecO. The sequence is that of Recombination protein RecR from Helicobacter pylori (strain J99 / ATCC 700824) (Campylobacter pylori J99).